We begin with the raw amino-acid sequence, 141 residues long: Nucleoside diphosphate kinase (141 aa).

ATP contacts are provided by Lys-11, Phe-59, Arg-87, Thr-93, Arg-104, and Asn-114. His-117 serves as the catalytic Pros-phosphohistidine intermediate.

It belongs to the NDK family. Homotetramer. Requires Mg(2+) as cofactor.

The protein resides in the cytoplasm. It carries out the reaction a 2'-deoxyribonucleoside 5'-diphosphate + ATP = a 2'-deoxyribonucleoside 5'-triphosphate + ADP. The enzyme catalyses a ribonucleoside 5'-diphosphate + ATP = a ribonucleoside 5'-triphosphate + ADP. Functionally, major role in the synthesis of nucleoside triphosphates other than ATP. The ATP gamma phosphate is transferred to the NDP beta phosphate via a ping-pong mechanism, using a phosphorylated active-site intermediate. The protein is Nucleoside diphosphate kinase of Burkholderia ambifaria (strain MC40-6).